A 155-amino-acid chain; its full sequence is UPF0461 protein C5orf24 homolog (155 aa).

Positions 60 to 69 (NETHLQTSTS) are enriched in polar residues. The interval 60–155 (NETHLQTSTS…QQALMCSSDA (96 aa)) is disordered. Positions 78–92 (LKKKKNVGRSGKRGR) are enriched in basic residues. The span at 94–107 (SGTTKSAGYRTSTG) shows a compositional bias: polar residues.

Belongs to the UPF0461 family.

This is UPF0461 protein C5orf24 homolog from Xenopus laevis (African clawed frog).